Consider the following 509-residue polypeptide: tRNA-2-methylthio-N(6)-dimethylallyladenosine synthase (509 aa).

The interval 1–20 (MNEKQKQESGQVNPADKTSE) is disordered. Positions 66–184 (RKFYIRTYGC…LPELLSEAYL (119 aa)) constitute an MTTase N-terminal domain. Residues cysteine 75, cysteine 111, cysteine 145, cysteine 221, cysteine 225, and cysteine 228 each coordinate [4Fe-4S] cluster. In terms of domain architecture, Radical SAM core spans 207–437 (RNGKIKGWVN…NDLVKEISAK (231 aa)). The region spanning 440–503 (KEYEGRTVEV…TWSLDGVMAG (64 aa)) is the TRAM domain.

The protein belongs to the methylthiotransferase family. MiaB subfamily. In terms of assembly, monomer. [4Fe-4S] cluster serves as cofactor.

Its subcellular location is the cytoplasm. It carries out the reaction N(6)-dimethylallyladenosine(37) in tRNA + (sulfur carrier)-SH + AH2 + 2 S-adenosyl-L-methionine = 2-methylsulfanyl-N(6)-dimethylallyladenosine(37) in tRNA + (sulfur carrier)-H + 5'-deoxyadenosine + L-methionine + A + S-adenosyl-L-homocysteine + 2 H(+). In terms of biological role, catalyzes the methylthiolation of N6-(dimethylallyl)adenosine (i(6)A), leading to the formation of 2-methylthio-N6-(dimethylallyl)adenosine (ms(2)i(6)A) at position 37 in tRNAs that read codons beginning with uridine. The chain is tRNA-2-methylthio-N(6)-dimethylallyladenosine synthase from Bacillus velezensis (strain DSM 23117 / BGSC 10A6 / LMG 26770 / FZB42) (Bacillus amyloliquefaciens subsp. plantarum).